The primary structure comprises 564 residues: MFS-type efflux pump LUC4 (564 aa).

The segment covering 1-15 (MGQSQDNTQLTTASP) has biased composition (polar residues). Positions 1-35 (MGQSQDNTQLTTASPQAEKDLSSNDNPPESEPAAP) are disordered. The next 5 membrane-spanning stretches (helical) occupy residues 42 to 62 (WLVF…TSII), 78 to 98 (LYVW…PIFA), 108 to 128 (SLTL…GGAH), 141 to 161 (GVGG…MVSV), and 170 to 190 (IIGG…GAFA). N-linked (GlcNAc...) asparagine glycosylation is present at N192. 3 helical membrane passes run 197 to 217 (WIFY…IVFL), 236 to 256 (WGGS…LSWG), and 268 to 288 (LVPL…QGAP). A glycan (N-linked (GlcNAc...) asparagine) is linked at N302. Helical transmembrane passes span 308–328 (LFVI…FLPV), 343–363 (VMLF…GIFI), 371–391 (VWHF…TLLD), 404–424 (LLFG…ILAS), and 436–456 (AWTF…AAAF). An N-linked (GlcNAc...) asparagine glycan is attached at N461. A helical membrane pass occupies residues 512 to 532 (KLVWQVSIAFSVLGFVLAFLV).

Belongs to the major facilitator superfamily. TCR/Tet family.

It is found in the membrane. In terms of biological role, MFS-type efflux pump; part of the gene cluster that mediates the biosynthesis of the mycotoxin lucilactaene and the lucilactaene-related compound NG-391 that act as cell cycle inhibitors with potent growth inhibitory activity against malarial parasites, moderate growth inhibitory activity against cancer cells, and no activity against bacteria and fungi. The sequence is that of MFS-type efflux pump LUC4 from Fusarium sp.